A 138-amino-acid polypeptide reads, in one-letter code: Transcription antitermination protein NusB (138 aa).

The protein belongs to the NusB family.

Functionally, involved in transcription antitermination. Required for transcription of ribosomal RNA (rRNA) genes. Binds specifically to the boxA antiterminator sequence of the ribosomal RNA (rrn) operons. The polypeptide is Transcription antitermination protein NusB (Helicobacter pylori (strain J99 / ATCC 700824) (Campylobacter pylori J99)).